The sequence spans 69 residues: DNA-directed RNA polymerase subunit omega (69 aa).

The protein belongs to the RNA polymerase subunit omega family. The RNAP catalytic core consists of 2 alpha, 1 beta, 1 beta' and 1 omega subunit. When a sigma factor is associated with the core the holoenzyme is formed, which can initiate transcription.

It catalyses the reaction RNA(n) + a ribonucleoside 5'-triphosphate = RNA(n+1) + diphosphate. Promotes RNA polymerase assembly. Latches the N- and C-terminal regions of the beta' subunit thereby facilitating its interaction with the beta and alpha subunits. This chain is DNA-directed RNA polymerase subunit omega, found in Carboxydothermus hydrogenoformans (strain ATCC BAA-161 / DSM 6008 / Z-2901).